The chain runs to 307 residues: tRNA pseudouridine synthase B (307 aa).

Residue Asp41 is the Nucleophile of the active site.

It belongs to the pseudouridine synthase TruB family. Type 1 subfamily.

It carries out the reaction uridine(55) in tRNA = pseudouridine(55) in tRNA. Its function is as follows. Responsible for synthesis of pseudouridine from uracil-55 in the psi GC loop of transfer RNAs. In Prochlorococcus marinus (strain AS9601), this protein is tRNA pseudouridine synthase B.